The sequence spans 260 residues: Phosphonates import ATP-binding protein PhnC 2 (260 aa).

In terms of domain architecture, ABC transporter spans 4–245 (IQINKATKTY…KNTLRTIYQR (242 aa)). Residue 37–44 (GPSGAGKS) coordinates ATP.

It belongs to the ABC transporter superfamily. Phosphonates importer (TC 3.A.1.9.1) family. In terms of assembly, the complex is composed of two ATP-binding proteins (PhnC), two transmembrane proteins (PhnE) and a solute-binding protein (PhnD).

It is found in the cell inner membrane. The enzyme catalyses phosphonate(out) + ATP + H2O = phosphonate(in) + ADP + phosphate + H(+). In terms of biological role, part of the ABC transporter complex PhnCDE involved in phosphonates import. Responsible for energy coupling to the transport system. The chain is Phosphonates import ATP-binding protein PhnC 2 from Trichodesmium erythraeum (strain IMS101).